We begin with the raw amino-acid sequence, 720 residues long: Nucleoporin NUP2 (720 aa).

Residues 1–33 form a disordered region; sequence MAKRVADAQIQRETYDSNESDDDVTPSTKVASS. S17 and S20 each carry phosphoserine. The interval 35 to 50 is interaction with SRP1 NLS binding site 1; sequence VMNRRKIAMPKRRMAF. Disordered regions lie at residues 52–92 and 136–278; these read PFGS…SNSR and KSIE…VDNN. One copy of the FXF 1 repeat lies at 67–69; the sequence is FSF. Positions 81–92 are enriched in polar residues; the sequence is VDNSPTTESNSR. At S137 the chain carries Phosphoserine. Basic and acidic residues predominate over residues 147 to 159; sequence NDAKPAKVEDVQK. Phosphoserine is present on S165. The stretch at 189–192 is one FXFG 1 repeat; sequence FSFG. Residues 193–202 show a composition bias toward basic and acidic residues; sequence PKKENRKKDE. 2 positions are modified to phosphoserine: S203 and S205. FXF repeat units lie at residues 216-218 and 247-249; these read FKF and FSF. Residues 243 to 278 show a composition bias toward polar residues; it reads NAKPFSFSSATSTTEQTKSKNPLSLTEATKTNVDNN. FXFG repeat units lie at residues 285 to 288, 302 to 305, and 318 to 321; these read FTFG and FVFG. The segment covering 315–324 has biased composition (polar residues); that stretch reads KSSFTFGSTT. Residues 315–604 form a disordered region; sequence KSSFTFGSTT…KPINLQNGEE (290 aa). Residues 345–360 show a composition bias toward low complexity; the sequence is SNDSNPSFSFSIPSKN. Residues S348 and S351 each carry the phosphoserine modification. Residues 352–354 form an FXF 4 repeat; the sequence is FSF. T361 is modified (phosphothreonine). Residues 369–372 form an FXFG 5 repeat; the sequence is FSFG. The span at 373–384 shows a compositional bias: polar residues; that stretch reads VPNSSKNETSKP. Residues 386–389 form an FXFG 6 repeat; the sequence is FSFG. Basic and acidic residues predominate over residues 424-435; it reads TEKEKESKKDSK. 5 FXFG repeats span residues 438 to 441, 474 to 477, 493 to 496, 511 to 514, and 524 to 527; these read FSFG and FTFG. Residues 479–495 show a composition bias toward low complexity; sequence NTNTTKTADTKAPTFTF. Positions 513–533 are enriched in polar residues; that stretch reads FGTSQPNNTPSFSFGKTTANL. Over residues 534 to 548 the composition is skewed to low complexity; the sequence is PANSSTSPAPSIPST. Residues 550–552 form an FXF 5 repeat; that stretch reads FKF. Polar residues predominate over residues 574–584; the sequence is TEATGNESQDA. S581 carries the post-translational modification Phosphoserine. The region spanning 583-720 is the RanBD1 domain; that stretch reads DATKVDATPE…AIEDAKKEMK (138 aa). Phosphothreonine is present on T590.

In terms of assembly, component of the nuclear pore complex (NPC). NPC constitutes the exclusive means of nucleocytoplasmic transport. NPCs allow the passive diffusion of ions and small molecules and the active, nuclear transport receptor-mediated bidirectional transport of macromolecules such as proteins, RNAs, ribonucleoparticles (RNPs), and ribosomal subunits across the nuclear envelope. Due to its 8-fold rotational symmetry, all subunits are present with 8 copies or multiples thereof. Binds to the nuclear basket of the NPC through NUP60 in a (GSP1, GSP2) GTPase-GTP-dependent manner. Interacts through its FG repeats with nuclear transport factors. Interacts with KAP122.

It localises to the nucleus. Its subcellular location is the nuclear pore complex. The protein localises to the nucleus membrane. Functionally, functions as a component of the nuclear pore complex (NPC). NPC components, collectively referred to as nucleoporins (NUPs), can play the role of both NPC structural components and of docking or interaction partners for transiently associated nuclear transport factors. Active directional transport is assured by both, a Phe-Gly (FG) repeat affinity gradient for these transport factors across the NPC and a transport cofactor concentration gradient across the nuclear envelope (GSP1 and GSP2 GTPases associated predominantly with GTP in the nucleus, with GDP in the cytoplasm). As one of the FG repeat nucleoporins NUP2 is involved in interactions with and guidance of nuclear transport receptors such as SRP1-KAP95 (importin alpha and beta) through the NPC. Like the closely related NUP1 it also plays an important role in disassembling and recycling SRP1-KAP95 to the cytoplasm after nuclear import. Upon entry of the heterotrimeric SRP1-KAP95-cargo complex in the nucleus, NUP2 binds through its N-terminus to the SRP1 nuclear localization signal (NLS) binding site, thus accelerating the release of the NLS-cargo. SRP1 in turn is released from NUP2 by binding of the GSP1-GTP associated export factor CSE1. NUP2 may also have a chromatin boundary/insulator activity through indirect interaction with genomic DNA via CSE1 and blocking of heterochromatin spreading. In Saccharomyces cerevisiae (strain ATCC 204508 / S288c) (Baker's yeast), this protein is Nucleoporin NUP2 (NUP2).